The chain runs to 89 residues: Cell division topological specificity factor (89 aa).

The protein belongs to the MinE family.

Functionally, prevents the cell division inhibition by proteins MinC and MinD at internal division sites while permitting inhibition at polar sites. This ensures cell division at the proper site by restricting the formation of a division septum at the midpoint of the long axis of the cell. This chain is Cell division topological specificity factor, found in Brucella anthropi (strain ATCC 49188 / DSM 6882 / CCUG 24695 / JCM 21032 / LMG 3331 / NBRC 15819 / NCTC 12168 / Alc 37) (Ochrobactrum anthropi).